The following is a 593-amino-acid chain: Prospero homeobox protein 2 (593 aa).

6 disordered regions span residues cysteine 24–serine 48, serine 79–arginine 130, threonine 153–cysteine 199, glutamine 260–lysine 284, proline 298–leucine 333, and glycine 356–leucine 388. Residues arginine 87–arginine 99 are compositionally biased toward basic and acidic residues. Residues proline 167–serine 181 are compositionally biased toward low complexity. Residues tryptophan 363–glutamate 380 are compositionally biased toward polar residues. In terms of domain architecture, Prospero-type homeo spans glutamine 433–methionine 491. Positions glutamine 433–phenylalanine 591 are homeo-Prospero. Positions glutamate 492–phenylalanine 591 constitute a Prospero domain.

Belongs to the Prospero homeodomain family. In terms of tissue distribution, expressed in testis.

The protein localises to the nucleus. In terms of biological role, transcription regulator. Does not seem to be essential for embryonic development and postnatal survival. The polypeptide is Prospero homeobox protein 2 (Prox2) (Mus musculus (Mouse)).